A 274-amino-acid chain; its full sequence is Thiamine kinase (274 aa).

This sequence belongs to the thiamine kinase family.

The enzyme catalyses thiamine + ATP = thiamine phosphate + ADP + H(+). Its pathway is cofactor biosynthesis; thiamine diphosphate biosynthesis; thiamine phosphate from thiamine: step 1/1. In terms of biological role, catalyzes the ATP-dependent phosphorylation of thiamine to thiamine phosphate. Is involved in thiamine salvage. The chain is Thiamine kinase from Escherichia coli O157:H7 (strain EC4115 / EHEC).